The sequence spans 363 residues: Cytochrome b (363 aa).

Transmembrane regions (helical) follow at residues 24–44, 68–90, 105–125, and 171–191; these read VGFS…CLAW, FVIR…IHIF, VWFI…IGYV, and LHVL…LHLF. The heme b site is built by histidine 74 and histidine 88. Heme b-binding residues include histidine 175 and histidine 189. Histidine 194 provides a ligand contact to a ubiquinone. Transmembrane regions (helical) follow at residues 219–239, 287–307, 321–341, and 342–362; these read FYLR…YVIF, FLMV…ILWF, LILF…VLAY, and PIWM…VCRL.

It belongs to the cytochrome b family. The main subunits of complex b-c1 are: cytochrome b, cytochrome c1 and the Rieske protein. The cofactor is heme b.

It is found in the mitochondrion inner membrane. Functionally, component of the ubiquinol-cytochrome c reductase complex (complex III or cytochrome b-c1 complex) that is part of the mitochondrial respiratory chain. The b-c1 complex mediates electron transfer from ubiquinol to cytochrome c. Contributes to the generation of a proton gradient across the mitochondrial membrane that is then used for ATP synthesis. The sequence is that of Cytochrome b (MT-CYB) from Trypanosoma brucei brucei.